Here is a 542-residue protein sequence, read N- to C-terminus: Phosphoacetylglucosamine mutase (542 aa).

The residue at position 1 (methionine 1) is an N-acetylmethionine. Threonine 62 bears the Phosphothreonine mark. Serine 64 functions as the Phosphoserine intermediate in the catalytic mechanism. Mg(2+) contacts are provided by serine 64, aspartate 276, aspartate 278, and aspartate 280. At serine 64 the chain carries Phosphoserine. Substrate-binding positions include 370 to 372 (EAN), 496 to 500 (RPSGT), and arginine 505.

It belongs to the phosphohexose mutase family. It depends on Mg(2+) as a cofactor.

The catalysed reaction is N-acetyl-alpha-D-glucosamine 1-phosphate = N-acetyl-D-glucosamine 6-phosphate. The protein operates within nucleotide-sugar biosynthesis; UDP-N-acetyl-alpha-D-glucosamine biosynthesis; N-acetyl-alpha-D-glucosamine 1-phosphate from alpha-D-glucosamine 6-phosphate (route I): step 2/2. Its activity is regulated as follows. Inhibited by Mn(2+), Cd(2+), Zn(2+), Cu(2+) and Be(2+). Catalyzes the conversion of GlcNAc-6-P into GlcNAc-1-P during the synthesis of uridine diphosphate/UDP-GlcNAc, a sugar nucleotide critical to multiple glycosylation pathways including protein N- and O-glycosylation. This is Phosphoacetylglucosamine mutase from Sus scrofa (Pig).